Reading from the N-terminus, the 346-residue chain is Glycerol-3-phosphate dehydrogenase [NAD(P)+] (346 aa).

Positions 15, 16, 36, and 110 each coordinate NADPH. Residues K110, G139, and S141 each coordinate sn-glycerol 3-phosphate. A143 lines the NADPH pocket. Residues K194, D247, S257, R258, and N259 each coordinate sn-glycerol 3-phosphate. Catalysis depends on K194, which acts as the Proton acceptor. An NADPH-binding site is contributed by R258. Residues V282 and E284 each coordinate NADPH.

The protein belongs to the NAD-dependent glycerol-3-phosphate dehydrogenase family.

Its subcellular location is the cytoplasm. The enzyme catalyses sn-glycerol 3-phosphate + NAD(+) = dihydroxyacetone phosphate + NADH + H(+). It catalyses the reaction sn-glycerol 3-phosphate + NADP(+) = dihydroxyacetone phosphate + NADPH + H(+). It participates in membrane lipid metabolism; glycerophospholipid metabolism. Functionally, catalyzes the reduction of the glycolytic intermediate dihydroxyacetone phosphate (DHAP) to sn-glycerol 3-phosphate (G3P), the key precursor for phospholipid synthesis. This Xylella fastidiosa (strain Temecula1 / ATCC 700964) protein is Glycerol-3-phosphate dehydrogenase [NAD(P)+].